We begin with the raw amino-acid sequence, 104 residues long: Gastrin (104 aa).

The first 21 residues, 1–21, serve as a signal peptide directing secretion; it reads MPRLCVCMLVLVLALATFSEA. Residues 22 to 58 constitute a propeptide that is removed on maturation; that stretch reads SWKPRSQLQDASSGPRTNGALEQHQLEKLGPASHHRR. Positions 23–104 are disordered; that stretch reads WKPRSQLQDA…RSAEEEDQYN (82 aa). A compositionally biased stretch (polar residues) spans 25 to 37; that stretch reads PRSQLQDASSGPR. At Y87 the chain carries Sulfotyrosine. Position 92 is a phenylalanine amide (F92). S96 is subject to Phosphoserine. Positions 96-104 are excised as a propeptide; the sequence is SAEEEDQYN. Y103 bears the Sulfotyrosine mark.

The protein belongs to the gastrin/cholecystokinin family. Sulfation on Tyr-87 enhances proteolytic processing, and blocks peptide degradation. Levels of sulfation differ between proteolytically-cleaved gastrins and between tissues.

The protein resides in the secreted. Gastrin stimulates the stomach mucosa to produce and secrete hydrochloric acid and the pancreas to secrete its digestive enzymes. It also stimulates smooth muscle contraction and increases blood circulation and water secretion in the stomach and intestine. In Rattus norvegicus (Rat), this protein is Gastrin (Gast).